Here is a 250-residue protein sequence, read N- to C-terminus: MPAPVLSGPQYLREGLKLVLSPGLRLFVLLPLAINLVLFVGLIYLAGHQFSLWVDTLMPSLPEWLSFLSYILWPLFVVLVALMVFFTFTMLANVIAAPFNGFLAEKVEVVVRGTDDFPAFSWGELIAMIPRTLAREMRKLGYFLPRAIGLFILSFIPVVNIVAAPLWLLFGVWMMAIQYIDYPADNHKLGWNEMLAWLRQKRWQSMSFGGIVYLVLLIPVVNILMMPAAVAGATLFWVRERGAENLVTQR.

4 helical membrane-spanning segments follow: residues 26–46 (LFVLLPLAINLVLFVGLIYLA), 71–91 (ILWPLFVVLVALMVFFTFTML), 150–170 (LFILSFIPVVNIVAAPLWLLF), and 211–231 (IVYLVLLIPVVNILMMPAAVA).

It belongs to the CysZ family.

The protein localises to the cell inner membrane. Its function is as follows. High affinity, high specificity proton-dependent sulfate transporter, which mediates sulfate uptake. Provides the sulfur source for the cysteine synthesis pathway. This Pseudomonas fluorescens (strain Pf0-1) protein is Sulfate transporter CysZ.